Reading from the N-terminus, the 974-residue chain is Translation initiation factor IF-2 (974 aa).

3 disordered regions span residues 67–86 (TRKHTSEIKQSDATGKARTI), 101–133 (DVAEGAEQGQAQVAEADDDAELKRREEEARREA), and 146–385 (RQER…TFQA). Low complexity predominate over residues 105–114 (GAEQGQAQVA). Composition is skewed to basic and acidic residues over residues 121-133 (ELKRREEEARREA) and 146-181 (RQERLEREEAERRAREEAAEAERRRAEEEAAAKRAA). Low complexity predominate over residues 182–197 (AEAAAAQQAAAQQAAE). Basic and acidic residues predominate over residues 210 to 261 (EEARAAAERAAQREAAKKAEDAAREAADKARAEQEEIRKRREAAEAEARAIR). A compositionally biased stretch (low complexity) spans 313–329 (PAGATPATTQAPAAGAG). Over residues 358-371 (SSGGVDRGWRGGPK) the composition is skewed to gly residues. Residues 474-643 (PRPPVVTVMG…LLQAEVLELK (170 aa)) enclose the tr-type G domain. The G1 stretch occupies residues 483–490 (GHVDHGKT). 483–490 (GHVDHGKT) provides a ligand contact to GTP. A G2 region spans residues 508–512 (GITQH). A G3 region spans residues 529–532 (DTPG). GTP is bound by residues 529–533 (DTPGH) and 583–586 (NKID). The interval 583–586 (NKID) is G4. A G5 region spans residues 619-621 (SAK).

This sequence belongs to the TRAFAC class translation factor GTPase superfamily. Classic translation factor GTPase family. IF-2 subfamily.

Its subcellular location is the cytoplasm. In terms of biological role, one of the essential components for the initiation of protein synthesis. Protects formylmethionyl-tRNA from spontaneous hydrolysis and promotes its binding to the 30S ribosomal subunits. Also involved in the hydrolysis of GTP during the formation of the 70S ribosomal complex. The protein is Translation initiation factor IF-2 of Burkholderia vietnamiensis (strain G4 / LMG 22486) (Burkholderia cepacia (strain R1808)).